Reading from the N-terminus, the 259-residue chain is 2-oxoglutaramate amidase (259 aa).

The region spanning 3–238 (WTISCLQFDI…EGIVRAEIDL (236 aa)) is the CN hydrolase domain. E42 acts as the Proton acceptor in catalysis. Catalysis depends on K111, which acts as the Proton donor. C145 functions as the Nucleophile in the catalytic mechanism.

Belongs to the carbon-nitrogen hydrolase superfamily. NIT1/NIT2 family.

It carries out the reaction 2-oxoglutaramate + H2O = 2-oxoglutarate + NH4(+). Its function is as follows. Involved in the methylthioribose (MTR) recycling pathway. Probably catalyzes the conversion of 2-oxoglutaramate to 2-oxoglutarate. This Bacillus subtilis (strain 168) protein is 2-oxoglutaramate amidase.